The primary structure comprises 359 residues: Molybdenum import ATP-binding protein ModC (359 aa).

An ABC transporter domain is found at 1 to 236; that stretch reads MNTEIKARFR…IDLPAAFADD (236 aa). Position 34 to 41 (34 to 41) interacts with ATP; that stretch reads GHSGSGKT. The region spanning 294 to 359 is the Mop domain; sequence QSSILNCVSA…AQIKAVALLA (66 aa).

Belongs to the ABC transporter superfamily. Molybdate importer (TC 3.A.1.8) family. In terms of assembly, the complex is composed of two ATP-binding proteins (ModC), two transmembrane proteins (ModB) and a solute-binding protein (ModA).

It is found in the cell inner membrane. The catalysed reaction is molybdate(out) + ATP + H2O = molybdate(in) + ADP + phosphate + H(+). Functionally, part of the ABC transporter complex ModABC involved in molybdenum import. Responsible for energy coupling to the transport system. In Dechloromonas aromatica (strain RCB), this protein is Molybdenum import ATP-binding protein ModC.